Consider the following 314-residue polypeptide: Mitochondrial translation factor 2 (314 aa).

Residues 111 to 136 (ENSSNIYDPSSPPDSPRKQQTHLGTI) are disordered.

Component of the MRH5C complex, composed of mrh5, ppr4, mtf2, and sls1. Proteins mtf2 and sls1 form a subcomplex that serves as a scaffold to bring mrh5 and ppr4 together. The MRH5C complex associates with the small subunit of the mitochondrial ribosome.

Translation activation factor that as part of the MRH5C complex specifically recruits cox1 mRNA to the mitochondrial ribosome for translation initiation. The protein is Mitochondrial translation factor 2 of Schizosaccharomyces pombe (strain 972 / ATCC 24843) (Fission yeast).